The chain runs to 211 residues: Guanylate kinase (211 aa).

One can recognise a Guanylate kinase-like domain in the interval 7 to 185 (GLLIVVTGPS…AVAELRAIIM (179 aa)). 14-21 (GPSAVGKG) contributes to the ATP binding site.

It belongs to the guanylate kinase family.

The protein resides in the cytoplasm. It catalyses the reaction GMP + ATP = GDP + ADP. Its function is as follows. Essential for recycling GMP and indirectly, cGMP. The chain is Guanylate kinase from Symbiobacterium thermophilum (strain DSM 24528 / JCM 14929 / IAM 14863 / T).